Consider the following 341-residue polypeptide: HTH-type transcriptional repressor PurR (341 aa).

The HTH lacI-type domain occupies 2-56 (ATIKDVAKHAGVSTTTVSHVINKTRFVAEDTKAAVWAAIKALNYSPSAVARSLKV). Residues 4 to 23 (IKDVAKHAGVSTTTVSHVIN) constitute a DNA-binding region (H-T-H motif). The DNA-binding element occupies 48–56 (SAVARSLKV). Residues Tyr73, Arg190, Thr192, Phe221, and Asp275 each coordinate hypoxanthine.

As to quaternary structure, homodimer.

It functions in the pathway purine metabolism; purine nucleotide biosynthesis [regulation]. Its function is as follows. Is the main repressor of the genes involved in the de novo synthesis of purine nucleotides, regulating purB, purC, purEK, purF, purHD, purL, purMN and guaBA expression. PurR is allosterically activated to bind its cognate DNA by binding the purine corepressors, hypoxanthine or guanine, thereby effecting transcription repression. The chain is HTH-type transcriptional repressor PurR from Photorhabdus laumondii subsp. laumondii (strain DSM 15139 / CIP 105565 / TT01) (Photorhabdus luminescens subsp. laumondii).